Here is a 321-residue protein sequence, read N- to C-terminus: MIIFTLRRLLLLLVTLFFLTFIGFSLSYFTPHAPLQGASLWNAWVFWFNGLLHWDFGVSSINGQLISEQLKEVFPATMELCILAFGFALMVGIPVGMLAGVTRSKWPDRFISALALLGFSIPVFWLALLLTLFFSLTLGWLPVSGRFDLLYEVKPVTGFAIIDAWISDSPWRDEMVMSAIRHMVLPVLTLSVAPTTEVIRLMRISTIEVYDQNYVKAAATRGLSRFTILRRHVLHNALPPVIPRLGLQFSTMLTLAMITEMVFSWPGLGRWLIHAIRQQDYAAISAGVMVIGSLVIVVNVISDILGAMANPLKHKEWYALR.

The Cytoplasmic segment spans residues 1–8 (MIIFTLRR). The helical transmembrane segment at 9-29 (LLLLLVTLFFLTFIGFSLSYF) threads the bilayer. Topologically, residues 30–80 (TPHAPLQGASLWNAWVFWFNGLLHWDFGVSSINGQLISEQLKEVFPATMEL) are periplasmic. An ABC transmembrane type-1 domain is found at 74 to 302 (FPATMELCIL…SLVIVVNVIS (229 aa)). Residues 81–101 (CILAFGFALMVGIPVGMLAGV) traverse the membrane as a helical segment. The Cytoplasmic portion of the chain corresponds to 102 to 113 (TRSKWPDRFISA). A helical transmembrane segment spans residues 114–134 (LALLGFSIPVFWLALLLTLFF). Residues 135 to 174 (SLTLGWLPVSGRFDLLYEVKPVTGFAIIDAWISDSPWRDE) are Periplasmic-facing. Residues 175 to 195 (MVMSAIRHMVLPVLTLSVAPT) form a helical membrane-spanning segment. Residues 196-248 (TEVIRLMRISTIEVYDQNYVKAAATRGLSRFTILRRHVLHNALPPVIPRLGLQ) are Cytoplasmic-facing. A helical membrane pass occupies residues 249–269 (FSTMLTLAMITEMVFSWPGLG). Over 270–280 (RWLIHAIRQQD) the chain is Periplasmic. A helical transmembrane segment spans residues 281–301 (YAAISAGVMVIGSLVIVVNVI). Topologically, residues 302 to 321 (SDILGAMANPLKHKEWYALR) are cytoplasmic.

The protein belongs to the binding-protein-dependent transport system permease family. OppBC subfamily.

Its subcellular location is the cell inner membrane. Involved in a peptide intake transport system that plays a role in the resistance to antimicrobial peptides. This chain is Peptide transport system permease protein SapB, found in Salmonella typhimurium (strain LT2 / SGSC1412 / ATCC 700720).